The following is a 282-amino-acid chain: Succinate dehydrogenase [ubiquinone] iron-sulfur subunit, mitochondrial (282 aa).

In terms of domain architecture, 2Fe-2S ferredoxin-type spans 43–131 (YRFNPEAPGA…STKIYPLPHM (89 aa)). Residues Cys-91, Cys-96, Cys-99, and Cys-111 each coordinate [2Fe-2S] cluster. Residues 174–204 (ERDRLDGLYECILCACCSTSCPSYWWNADKY) form the 4Fe-4S ferredoxin-type domain. The [4Fe-4S] cluster site is built by Cys-184, Cys-187, and Cys-190. Cys-194 is a binding site for [3Fe-4S] cluster. Residue Trp-199 coordinates a ubiquinone. Cys-241 and Cys-247 together coordinate [3Fe-4S] cluster. [4Fe-4S] cluster is bound at residue Cys-251.

This sequence belongs to the succinate dehydrogenase/fumarate reductase iron-sulfur protein family. Component of complex II composed of four subunits: a flavoprotein (FP), an iron-sulfur protein (IP), and a cytochrome b composed of a large and a small subunit. Requires [2Fe-2S] cluster as cofactor. The cofactor is [3Fe-4S] cluster. [4Fe-4S] cluster is required as a cofactor.

Its subcellular location is the mitochondrion inner membrane. It carries out the reaction a quinone + succinate = fumarate + a quinol. Its pathway is carbohydrate metabolism; tricarboxylic acid cycle; fumarate from succinate (eukaryal route): step 1/1. Functionally, iron-sulfur protein (IP) subunit of succinate dehydrogenase (SDH) that is involved in complex II of the mitochondrial electron transport chain and is responsible for transferring electrons from succinate to ubiquinone (coenzyme Q). The protein is Succinate dehydrogenase [ubiquinone] iron-sulfur subunit, mitochondrial of Caenorhabditis briggsae.